We begin with the raw amino-acid sequence, 306 residues long: Glutaminase (306 aa).

Substrate-binding residues include S64, N115, E159, N166, Y190, Y242, and V260.

It belongs to the glutaminase family. As to quaternary structure, homotetramer.

It catalyses the reaction L-glutamine + H2O = L-glutamate + NH4(+). The sequence is that of Glutaminase from Photobacterium profundum (strain SS9).